Here is a 242-residue protein sequence, read N- to C-terminus: Protein Thf1 (242 aa).

Residues 178–209 (SSDKLQKDLDLYRSNLDKMQQLLTVIEDTLEA) are a coiled coil. A disordered region spans residues 212–242 (KKRASQKLEKKPEVVEEKEHKENEEQQQSSN). Residues 217-235 (QKLEKKPEVVEEKEHKENE) show a composition bias toward basic and acidic residues.

This sequence belongs to the THF1 family.

May be involved in photosynthetic membrane biogenesis. The sequence is that of Protein Thf1 from Crocosphaera subtropica (strain ATCC 51142 / BH68) (Cyanothece sp. (strain ATCC 51142)).